Here is a 120-residue protein sequence, read N- to C-terminus: Large ribosomal subunit protein uL18 (120 aa).

It belongs to the universal ribosomal protein uL18 family. In terms of assembly, part of the 50S ribosomal subunit; part of the 5S rRNA/L5/L18/L25 subcomplex. Contacts the 5S and 23S rRNAs.

Functionally, this is one of the proteins that bind and probably mediate the attachment of the 5S RNA into the large ribosomal subunit, where it forms part of the central protuberance. This chain is Large ribosomal subunit protein uL18, found in Allorhizobium ampelinum (strain ATCC BAA-846 / DSM 112012 / S4) (Agrobacterium vitis (strain S4)).